The chain runs to 409 residues: Serine/threonine transporter SstT (409 aa).

8 consecutive transmembrane segments (helical) span residues 24–44 (LALGIVIGSVSPQLGLAAGLF), 48–68 (FVGALKAVAPVLVFILVAATI), 82–102 (IIVLYLIGTFSAALTAVIAGM), 142–162 (AIANANYIGILAWALVLGAAL), 194–214 (LGIFGLVSSTIAETGFGALAG), 218–238 (LLAVLLGCMAFIALAVNPAIV), 292–312 (IPLGATINMAGAAITITVLAM), and 319–339 (GITVDFATALLLSLVATVSAC).

The protein belongs to the dicarboxylate/amino acid:cation symporter (DAACS) (TC 2.A.23) family.

The protein resides in the cell inner membrane. The enzyme catalyses L-serine(in) + Na(+)(in) = L-serine(out) + Na(+)(out). The catalysed reaction is L-threonine(in) + Na(+)(in) = L-threonine(out) + Na(+)(out). Functionally, involved in the import of serine and threonine into the cell, with the concomitant import of sodium (symport system). The protein is Serine/threonine transporter SstT of Neisseria meningitidis serogroup B (strain ATCC BAA-335 / MC58).